The following is a 319-amino-acid chain: MFDDLSNYRPANPALWQGRKDTANQERFFQKITFIDNQNELMTKDKKTIFLGFASDTGIKRNLGRTGAKLGPDQIKTQLAKLPCHNNKHYVDLGNVVCENDELELSQSQFAQIVHFCHENGHQICAFGGGHEIAWAHYQGLSSLYPKLGVINFDAHFDLRPYKKGEFGNSGTPFSQIATYCEEKKMPFHYCCIGVQKFGNTPSLFEKAKKLNVSYLSAEDLYEQSQAWQIAFLDDFILNLDHIYLTICLDVLAECYAPGVSAPQALGLSPWQIMPLLKYLIQSGKVVSLDIAELSPPLDSELKTARLAALIIAELLDTN.

Histidine 131, aspartate 154, histidine 156, aspartate 158, cysteine 248, and aspartate 250 together coordinate Mn(2+).

The protein belongs to the arginase family. Requires Mn(2+) as cofactor.

The catalysed reaction is N-formimidoyl-L-glutamate + H2O = formamide + L-glutamate. It functions in the pathway amino-acid degradation; L-histidine degradation into L-glutamate; L-glutamate from N-formimidoyl-L-glutamate (hydrolase route): step 1/1. In terms of biological role, catalyzes the conversion of N-formimidoyl-L-glutamate to L-glutamate and formamide. This Legionella pneumophila subsp. pneumophila (strain Philadelphia 1 / ATCC 33152 / DSM 7513) protein is Formimidoylglutamase.